Reading from the N-terminus, the 483-residue chain is Keratin, type II cytoskeletal 8 (483 aa).

A compositionally biased stretch (polar residues) spans 1–16 (MSIRVTQKSYKVSTSG). Positions 1–41 (MSIRVTQKSYKVSTSGPRAFSSRSYTSGPGSRISSSSFSRV) are disordered. Residues 1-90 (MSIRVTQKSY…DPNIQAVRTQ (90 aa)) form a head region. S9 is modified (phosphoserine; by PKC/PRKCE). K11 is covalently cross-linked (Glycyl lysine isopeptide (Lys-Gly) (interchain with G-Cter in SUMO2)). S13, S15, S21, and S22 each carry phosphoserine. Residue R23 is modified to Omega-N-methylarginine. S24 carries the phosphoserine; by PKC/PRKCE modification. Over residues 24–41 (SYTSGPGSRISSSSFSRV) the composition is skewed to low complexity. Position 26 is a phosphothreonine (T26). 2 positions are modified to phosphoserine: S27 and S31. R32 carries the post-translational modification Omega-N-methylarginine. A phosphoserine mark is found at S34, S37, and S39. An Omega-N-methylarginine modification is found at R40. A phosphoserine mark is found at S43 and S44. R47 bears the Asymmetric dimethylarginine; alternate mark. The residue at position 47 (R47) is an Omega-N-methylarginine; alternate. Phosphoserine; by MAPK is present on S74. The coil 1A stretch occupies residues 91 to 126 (EKEQIKTLNNKFASFIDKVRFLEQQNKMLETKWSLL). In terms of domain architecture, IF rod spans 91 to 402 (EKEQIKTLNN…KLLEGEESRL (312 aa)). K101 carries the post-translational modification N6-malonyllysine. Glycyl lysine isopeptide (Lys-Gly) (interchain with G-Cter in SUMO2) cross-links involve residues K122 and K130. A linker 1 region spans residues 127 to 143 (QQQKTARSNMDNMFESY). The coil 1B stretch occupies residues 144-235 (INNLRRQLET…QLYEEEIREL (92 aa)). A Glycyl lysine isopeptide (Lys-Gly) (interchain with G-Cter in SUMO1); alternate cross-link involves residue K197. A Glycyl lysine isopeptide (Lys-Gly) (interchain with G-Cter in SUMO2); alternate cross-link involves residue K197. The residue at position 207 (K207) is an N6-acetyllysine. Position 228 is a phosphotyrosine (Y228). Residues 236 to 259 (QSQISDTSVVLSMDNSRSLDMDSI) are linker 12. Phosphoserine occurs at positions 253 and 258. The tract at residues 260 to 398 (IAEVKAQYED…ATYRKLLEGE (139 aa)) is coil 2. The interval 261-382 (AEVKAQYEDI…EYQELMNVKL (122 aa)) is necessary for interaction with PNN. K264 is covalently cross-linked (Glycyl lysine isopeptide (Lys-Gly) (interchain with G-Cter in SUMO2)). S274 carries the phosphoserine modification. K285 is covalently cross-linked (Glycyl lysine isopeptide (Lys-Gly) (interchain with G-Cter in SUMO2)). S291 is subject to Phosphoserine. Residue K295 forms a Glycyl lysine isopeptide (Lys-Gly) (interchain with G-Cter in SUMO2); alternate linkage. K295 bears the N6-acetyllysine; alternate mark. K304 is covalently cross-linked (Glycyl lysine isopeptide (Lys-Gly) (interchain with G-Cter in SUMO2)). Residue K325 forms a Glycyl lysine isopeptide (Lys-Gly) (interchain with G-Cter in SUMO2); alternate linkage. K325 is subject to N6-acetyllysine; alternate. Residue S330 is modified to Phosphoserine. Residue K393 forms a Glycyl lysine isopeptide (Lys-Gly) (interchain with G-Cter in SUMO2) linkage. The interval 399-483 (ESRLESGMQN…VSESSDVLPK (85 aa)) is tail. Phosphoserine occurs at positions 400, 404, 410, 417, and 424. Position 432 is a phosphoserine; by CaMK2 and MAPK (S432). A Glycyl lysine isopeptide (Lys-Gly) (interchain with G-Cter in SUMO1); alternate cross-link involves residue K472. A Glycyl lysine isopeptide (Lys-Gly) (interchain with G-Cter in SUMO2); alternate cross-link involves residue K472. S475, S477, and S478 each carry phosphoserine.

It belongs to the intermediate filament family. As to quaternary structure, heterotetramer of two type I and two type II keratins. Forms a heterodimer with KRT18. Associates with KRT20. Interacts with PLEC isoform 1C, when in a heterodimer with KRT18. Interacts with PNN. When associated with KRT19, interacts with DMD. Interacts with TCHP. Interacts with APEX1. Interacts with GPER1. Interacts with EPPK1. Interacts with PKP1 and PKP2. (Microbial infection) Interacts with hepatitis C virus/HCV core protein. Phosphorylation on serine residues is enhanced during EGF stimulation and mitosis. Ser-74 phosphorylation plays an important role in keratin filament reorganization. Post-translationally, O-glycosylated. O-GlcNAcylation at multiple sites increases solubility, and decreases stability by inducing proteasomal degradation. In terms of processing, O-glycosylated (O-GlcNAcylated), in a cell cycle-dependent manner. In terms of tissue distribution, observed in muscle fibers accumulating in the costameres of myoplasm at the sarcolemma membrane in structures that contain dystrophin and spectrin. Expressed in gingival mucosa and hard palate of the oral cavity.

The protein localises to the cytoplasm. It is found in the nucleus. Its subcellular location is the nucleoplasm. It localises to the nucleus matrix. In terms of biological role, together with KRT19, helps to link the contractile apparatus to dystrophin at the costameres of striated muscle. The polypeptide is Keratin, type II cytoskeletal 8 (KRT8) (Homo sapiens (Human)).